Here is a 773-residue protein sequence, read N- to C-terminus: Polyribonucleotide nucleotidyltransferase (773 aa).

Residues Asp-532 and Asp-538 each coordinate Mg(2+). The KH domain occupies 598–657 (PRVITIKVPVDKIGEVIGPKGKVINAITEETGAQISIEDDGTVFVGATDGLSAQAAINKI). An S1 motif domain is found at 669-738 (GERFLGTVVK…KRGKISLVLV (70 aa)). The tract at residues 749–773 (APADAGAAQEFGSGTAPADAATASS) is disordered.

This sequence belongs to the polyribonucleotide nucleotidyltransferase family. It depends on Mg(2+) as a cofactor.

Its subcellular location is the cytoplasm. It catalyses the reaction RNA(n+1) + phosphate = RNA(n) + a ribonucleoside 5'-diphosphate. In terms of biological role, involved in mRNA degradation. Catalyzes the phosphorolysis of single-stranded polyribonucleotides processively in the 3'- to 5'-direction. This Mycobacterium leprae (strain Br4923) protein is Polyribonucleotide nucleotidyltransferase.